A 558-amino-acid chain; its full sequence is MLQGFVQIALILAILVATAPLLGRYMARVFLGQSTWLDKIARPLESLIFAGSGITKHPSMGATQYVSAALISNLVMGVFVFLILMFQGSLPLNPTGLAAPSWDLALHTAISFVTNTNQQHYSGETTYTYFSQAGALGFLMFTSAATGIAVAIAFIRGLTGQAIGNFYQDLVLSITRILLPISLVGAILLLVAGVPETLAGPAQVTTLEGATQWIARGPVAHFEIIKELGENGGGFFGINSAHPFENPNNFANLLETVIMMVIPAGLIITYGIMAGNPEQGWLIFWMVFILYGILIAIAAVGEFQGNPLINQILGETQPNLEGKEVRFGWVLTALWAVSTTGTMCGAVNGMHDSLMPPGGFVTLSDLFLQIIWGGQGTGTAYLFVFLILTVFLTGLMVGRTPEFLGRKIEKREIVLASLILLIHPIAILIPTAITLAFPDTLAGISNPGFHGISQVAYEYASAAANNGSGFEGLADNTLWWNLSASFSLIAGRYVPIVALIFLADGMARKQPVPETSGTLHTDTTLFTGITAGAIIILGALTFLPILVLGPVAEAFNLV.

Helical transmembrane passes span 2 to 22 (LQGF…APLL), 66 to 86 (VSAA…ILMF), 135 to 155 (ALGF…IAFI), 177 to 197 (ILLP…VPET), 253 to 273 (LLET…YGIM), 280 to 300 (GWLI…IAAV), 327 to 347 (FGWV…CGAV), 354 to 374 (LMPP…IWGG), 378 to 398 (GTAY…LMVG), 413 to 433 (IVLA…PTAI), 482 to 502 (LSAS…LIFL), and 528 to 548 (GITA…ILVL).

Belongs to the KdpA family. As to quaternary structure, the system is composed of three essential subunits: KdpA, KdpB and KdpC.

It is found in the cell inner membrane. Its function is as follows. Part of the high-affinity ATP-driven potassium transport (or Kdp) system, which catalyzes the hydrolysis of ATP coupled with the electrogenic transport of potassium into the cytoplasm. This subunit binds the periplasmic potassium ions and delivers the ions to the membrane domain of KdpB through an intramembrane tunnel. This Synechocystis sp. (strain ATCC 27184 / PCC 6803 / Kazusa) protein is Potassium-transporting ATPase potassium-binding subunit.